The chain runs to 272 residues: Phosphate import ATP-binding protein PstB 1 (272 aa).

The ABC transporter domain maps to isoleucine 26–isoleucine 267. Residue glycine 58–serine 65 coordinates ATP.

The protein belongs to the ABC transporter superfamily. Phosphate importer (TC 3.A.1.7) family. The complex is composed of two ATP-binding proteins (PstB), two transmembrane proteins (PstC and PstA) and a solute-binding protein (PstS).

It is found in the cell inner membrane. The enzyme catalyses phosphate(out) + ATP + H2O = ADP + 2 phosphate(in) + H(+). Its function is as follows. Part of the ABC transporter complex PstSACB involved in phosphate import. Responsible for energy coupling to the transport system. The polypeptide is Phosphate import ATP-binding protein PstB 1 (Vibrio vulnificus (strain YJ016)).